The following is a 377-amino-acid chain: Cell division cycle-associated protein 7 (377 aa).

2 disordered regions span residues 58 to 113 and 144 to 211; these read RTRS…EEDG and IFSG…EEDK. Residues 76–100 are compositionally biased toward low complexity; it reads PARNTRRAANTKAAPPKPSESSAND. Residues 148–173 are interaction with MYC; sequence RHSLPGHRTKDSKSPRRRTFPGVASR. Positions 163 to 179 match the Nuclear localization signal motif; the sequence is RRRTFPGVASRRNPERR. The residue at position 166 (Thr166) is a Phosphothreonine. The residue at position 193 (Ser193) is a Phosphoserine. Position 199 is a phosphothreonine (Thr199). The segment covering 199-210 has biased composition (acidic residues); that stretch reads TEEEEDEEEEED. Lys211 is covalently cross-linked (Glycyl lysine isopeptide (Lys-Gly) (interchain with G-Cter in SUMO2)). Ser220 bears the Phosphoserine mark. Residues 253–377 form a mediates transcriptional activity region; that stretch reads EEEIRNICSN…SLKQEFEMQA (125 aa).

Interacts with MYC (via C-terminus), YWHAE and YWHAZ. In terms of processing, phosphorylation at Thr-166 promotes interaction with YWHAE and YWHAZ, dissociation from MYC and sequestration in the cytoplasm.

Its subcellular location is the nucleus. The protein resides in the cytoplasm. In terms of biological role, participates in MYC-mediated cell transformation and apoptosis; induces anchorage-independent growth and clonogenicity in lymphoblastoid cells. Insufficient to induce tumorigenicity when overexpressed but contributes to MYC-mediated tumorigenesis. May play a role as transcriptional regulator. The polypeptide is Cell division cycle-associated protein 7 (Cdca7) (Rattus norvegicus (Rat)).